The sequence spans 1344 residues: Myb-binding protein 1A (1344 aa).

The interval 1 to 24 is disordered; it reads MAEMKSPTKAEPASPAEAPQGDRR. Alanine 2 is subject to N-acetylalanine. Residues 2 to 580 form an interaction with MYB region; the sequence is AEMKSPTKAE…WDQMMSTLKE (579 aa). Phosphoserine is present on serine 14. 2 positions are modified to N6-acetyllysine: lysine 69 and lysine 156. 2 consecutive short sequence motifs (nuclear export signal) follow at residues 238–256 and 261–279; these read SEDN…ANSV and KLPD…ENKF. Disordered stretches follow at residues 696-752 and 1150-1344; these read NEDE…DVDP and PKSE…VQTP. A compositionally biased stretch (basic and acidic residues) spans 708–730; the sequence is TDEKQLKHGEDADSDSEDSKNSE. The span at 731–746 shows a compositional bias: acidic residues; sequence SDVDSEDGEESEEEDR. Over residues 1150–1161 the composition is skewed to basic and acidic residues; it reads PKSEKKNVKDIP. Lysine 1151 participates in a covalent cross-link: Glycyl lysine isopeptide (Lys-Gly) (interchain with G-Cter in SUMO2). The tract at residues 1154–1344 is required for nuclear and nucleolar localization; that stretch reads KKNVKDIPSD…RVARRRVQTP (191 aa). Serine 1162 and serine 1166 each carry phosphoserine. A compositionally biased stretch (basic residues) spans 1170 to 1187; the sequence is TKRKKKGFLPETKKRKKL. Serine 1189 carries the post-translational modification Phosphoserine. Position 1193 is a phosphothreonine (threonine 1193). A phosphoserine mark is found at serine 1221 and serine 1246. Residues 1247-1256 show a composition bias toward low complexity; it reads PAPNNPTLSP. Threonine 1253 is modified (phosphothreonine). Serine 1255 carries the phosphoserine modification. Threonine 1258 and threonine 1280 each carry phosphothreonine. Serine 1283, serine 1305, and serine 1318 each carry phosphoserine. The segment covering 1301-1316 has biased composition (basic residues); that stretch reads VKRRSSQSALPKKRAR. The span at 1317-1329 shows a compositional bias: low complexity; it reads LSLVSRSPSLLQS. Arginine 1322 carries the post-translational modification Citrulline. Phosphoserine occurs at positions 1323, 1325, and 1329. A compositionally biased stretch (basic residues) spans 1331–1344; it reads IRKRRVARRRVQTP.

This sequence belongs to the MYBBP1A family. Binds to and represses JUN and MYB via the leucine zipper regions present in these proteins. Also binds to and represses PPARGC1A: this interaction is abrogated when PPARGC1A is phosphorylated by MAPK1/ERK. Binds to and stimulates transcription by AHR. Binds to KPNA2. Component of the B-WICH complex, at least composed of SMARCA5/SNF2H, BAZ1B/WSTF, SF3B1, DEK, MYO1C, ERCC6, MYBBP1A and DDX21. Interacts with CLOCK and CRY1. In terms of processing, citrullinated by PADI4.

Its subcellular location is the nucleus. The protein resides in the nucleolus. The protein localises to the cytoplasm. May activate or repress transcription via interactions with sequence specific DNA-binding proteins. Repression may be mediated at least in part by histone deacetylase activity (HDAC activity). Acts as a corepressor and in concert with CRY1, represses the transcription of the core circadian clock component PER2. Preferentially binds to dimethylated histone H3 'Lys-9' (H3K9me2) on the PER2 promoter. Has a role in rRNA biogenesis together with PWP1. The sequence is that of Myb-binding protein 1A (Mybbp1a) from Rattus norvegicus (Rat).